A 528-amino-acid polypeptide reads, in one-letter code: Phosphoenolpyruvate carboxykinase (ATP) (528 aa).

Residues R56, Y192, and K198 each coordinate substrate. ATP contacts are provided by residues K198, H217, and 233-241 (GLSGTGKTT). The Mn(2+) site is built by K198 and H217. D254 provides a ligand contact to Mn(2+). ATP is bound by residues E282, R319, and T444. R319 serves as a coordination point for substrate.

It belongs to the phosphoenolpyruvate carboxykinase (ATP) family. Mn(2+) serves as cofactor.

The protein resides in the cytoplasm. The enzyme catalyses oxaloacetate + ATP = phosphoenolpyruvate + ADP + CO2. It functions in the pathway carbohydrate biosynthesis; gluconeogenesis. In terms of biological role, involved in the gluconeogenesis. Catalyzes the conversion of oxaloacetate (OAA) to phosphoenolpyruvate (PEP) through direct phosphoryl transfer between the nucleoside triphosphate and OAA. This Bacillus cytotoxicus (strain DSM 22905 / CIP 110041 / 391-98 / NVH 391-98) protein is Phosphoenolpyruvate carboxykinase (ATP).